Consider the following 765-residue polypeptide: 1,4-alpha-glucan branching enzyme GlgB (765 aa).

Residue aspartate 431 is the Nucleophile of the active site. Catalysis depends on glutamate 484, which acts as the Proton donor.

It belongs to the glycosyl hydrolase 13 family. GlgB subfamily. In terms of assembly, monomer.

The enzyme catalyses Transfers a segment of a (1-&gt;4)-alpha-D-glucan chain to a primary hydroxy group in a similar glucan chain.. The protein operates within glycan biosynthesis; glycogen biosynthesis. Its function is as follows. Catalyzes the formation of the alpha-1,6-glucosidic linkages in glycogen by scission of a 1,4-alpha-linked oligosaccharide from growing alpha-1,4-glucan chains and the subsequent attachment of the oligosaccharide to the alpha-1,6 position. The polypeptide is 1,4-alpha-glucan branching enzyme GlgB (Synechococcus sp. (strain CC9605)).